Reading from the N-terminus, the 259-residue chain is Diaminopimelate epimerase (259 aa).

Residues Asn14, Gln42, and Asn60 each coordinate substrate. The active-site Proton donor is Cys69. Residues 70-71 (GN), Asn151, Asn184, and 202-203 (ER) each bind substrate. Residue Cys211 is the Proton acceptor of the active site. Residue 212–213 (GS) participates in substrate binding.

Belongs to the diaminopimelate epimerase family. As to quaternary structure, homodimer.

It localises to the cytoplasm. The enzyme catalyses (2S,6S)-2,6-diaminopimelate = meso-2,6-diaminopimelate. It participates in amino-acid biosynthesis; L-lysine biosynthesis via DAP pathway; DL-2,6-diaminopimelate from LL-2,6-diaminopimelate: step 1/1. Functionally, catalyzes the stereoinversion of LL-2,6-diaminopimelate (L,L-DAP) to meso-diaminopimelate (meso-DAP), a precursor of L-lysine and an essential component of the bacterial peptidoglycan. This is Diaminopimelate epimerase from Wolbachia sp. subsp. Brugia malayi (strain TRS).